A 124-amino-acid polypeptide reads, in one-letter code: Conotoxin Im14.2 (124 aa).

A signal peptide spans 1 to 20; it reads MARFLSILLCFAMATGLAAG. Residues 21–99 constitute a propeptide that is removed on maturation; that stretch reads IRYPDRVLGR…AENPVRDPKK (79 aa).

Contain 2 disulfide bonds. As to expression, expressed by the venom duct.

It is found in the secreted. In terms of biological role, probable neurotoxin. In Conus imperialis (Imperial cone), this protein is Conotoxin Im14.2.